The chain runs to 248 residues: Proteasome subunit alpha (248 aa).

This sequence belongs to the peptidase T1A family. In terms of assembly, the 20S proteasome core is composed of 14 alpha and 14 beta subunits that assemble into four stacked heptameric rings, resulting in a barrel-shaped structure. The two inner rings, each composed of seven catalytic beta subunits, are sandwiched by two outer rings, each composed of seven alpha subunits. The catalytic chamber with the active sites is on the inside of the barrel. Has a gated structure, the ends of the cylinder being occluded by the N-termini of the alpha-subunits. Is capped by the proteasome-associated ATPase, ARC.

It is found in the cytoplasm. Its pathway is protein degradation; proteasomal Pup-dependent pathway. With respect to regulation, the formation of the proteasomal ATPase ARC-20S proteasome complex, likely via the docking of the C-termini of ARC into the intersubunit pockets in the alpha-rings, may trigger opening of the gate for substrate entry. Interconversion between the open-gate and close-gate conformations leads to a dynamic regulation of the 20S proteasome proteolysis activity. Its function is as follows. Component of the proteasome core, a large protease complex with broad specificity involved in protein degradation. In Mycobacterium tuberculosis (strain ATCC 25177 / H37Ra), this protein is Proteasome subunit alpha.